Reading from the N-terminus, the 176-residue chain is Large ribosomal subunit protein bL17m (176 aa).

The N-terminal 8 residues, 1–8, are a transit peptide targeting the mitochondrion; sequence MRLSLAAA.

This sequence belongs to the bacterial ribosomal protein bL17 family. In terms of assembly, component of the mitochondrial ribosome large subunit (39S) which comprises a 16S rRNA and about 50 distinct proteins.

It localises to the mitochondrion. The chain is Large ribosomal subunit protein bL17m (Mrpl17) from Rattus norvegicus (Rat).